The sequence spans 339 residues: DNA-directed RNA polymerase subunit alpha (339 aa).

An alpha N-terminal domain (alpha-NTD) region spans residues 1–233 (MVREEVAGST…DLFLPFLHAE (233 aa)). An alpha C-terminal domain (alpha-CTD) region spans residues 264–339 (KKGIPLNCIF…IDLLKNKLSF (76 aa)).

This sequence belongs to the RNA polymerase alpha chain family. In terms of assembly, in plastids the minimal PEP RNA polymerase catalytic core is composed of four subunits: alpha, beta, beta', and beta''. When a (nuclear-encoded) sigma factor is associated with the core the holoenzyme is formed, which can initiate transcription.

Its subcellular location is the plastid. It localises to the chloroplast. The enzyme catalyses RNA(n) + a ribonucleoside 5'-triphosphate = RNA(n+1) + diphosphate. Functionally, DNA-dependent RNA polymerase catalyzes the transcription of DNA into RNA using the four ribonucleoside triphosphates as substrates. The chain is DNA-directed RNA polymerase subunit alpha from Festucopsis serpentini.